A 202-amino-acid polypeptide reads, in one-letter code: T-cell surface glycoprotein CD3 epsilon chain (202 aa).

The N-terminal stretch at 1-21 (MQSRNLWRILGLCLLSVGAWG) is a signal peptide. Topologically, residues 22–122 (QDEDFKASDD…VCANCIEVNL (101 aa)) are extracellular. Residues 37–107 (PEKRFKVSIS…ADSIKEKSYL (71 aa)) enclose the Ig-like domain. Cysteine 54 and cysteine 96 are joined by a disulfide. A helical membrane pass occupies residues 123–143 (MAVVTIIVADICLTLGLLLMV). The Cytoplasmic segment spans residues 144–202 (YYWSKTRKANAKPVMRGTGAGSRPRGQNKEKPPPVPNPDYEPIRKGQQDLYSGLNQRGI). The disordered stretch occupies residues 156-202 (PVMRGTGAGSRPRGQNKEKPPPVPNPDYEPIRKGQQDLYSGLNQRGI). The interval 170–187 (QNKEKPPPVPNPDYEPIR) is NUMB-binding region. An ITAM domain is found at 173–200 (EKPPPVPNPDYEPIRKGQQDLYSGLNQR). The segment at 174–181 (KPPPVPNP) is proline-rich sequence. Residues tyrosine 183 and tyrosine 194 each carry the phosphotyrosine modification. Positions 192 to 202 (DLYSGLNQRGI) are enriched in polar residues.

The TCR-CD3 complex is composed of a CD3D/CD3E and a CD3G/CD3E heterodimers that preferentially associate with TCRalpha and TCRbeta, respectively, to form TCRalpha/CD3E/CD3G and TCRbeta/CD3G/CD3E trimers. In turn, the hexamer interacts with CD3Z homodimer to form the TCR-CD3 complex. Alternatively, TCRalpha and TCRbeta can be replaced by TCRgamma and TCRdelta. Interacts with CD6. Interacts (via Proline-rich sequence) with NCK1; the interaction is ligand dependent but independent of tyrosine kinase activation. Phosphorylated on Tyr residues after T-cell receptor triggering by LCK in association with CD4/CD8.

It localises to the cell membrane. In terms of biological role, part of the TCR-CD3 complex present on T-lymphocyte cell surface that plays an essential role in adaptive immune response. When antigen presenting cells (APCs) activate T-cell receptor (TCR), TCR-mediated signals are transmitted across the cell membrane by the CD3 chains CD3D, CD3E, CD3G and CD3Z. All CD3 chains contain immunoreceptor tyrosine-based activation motifs (ITAMs) in their cytoplasmic domain. Upon TCR engagement, these motifs become phosphorylated by Src family protein tyrosine kinases LCK and FYN, resulting in the activation of downstream signaling pathways. In addition of this role of signal transduction in T-cell activation, CD3E plays an essential role in correct T-cell development. Also participates in internalization and cell surface down-regulation of TCR-CD3 complexes via endocytosis sequences present in CD3E cytosolic region. In addition to its role as a TCR coreceptor, it serves as a receptor for ITPRIPL1. Ligand recognition inhibits T-cell activation by promoting interaction with NCK1, which prevents CD3E-ZAP70 interaction and blocks the ERK-NFkB signaling cascade and calcium influx. The chain is T-cell surface glycoprotein CD3 epsilon chain (CD3E) from Canis lupus familiaris (Dog).